Here is a 389-residue protein sequence, read N- to C-terminus: Tubulin-like protein CetZ3 (389 aa).

Residues 10-14, 110-112, Glu-142, Asn-169, and Asn-187 contribute to the GTP site; these read QAGGK and GTG.

This sequence belongs to the CetZ family.

Its subcellular location is the cytoplasm. Functionally, involved in cell shape control. The polypeptide is Tubulin-like protein CetZ3 (Haloferax volcanii (strain ATCC 29605 / DSM 3757 / JCM 8879 / NBRC 14742 / NCIMB 2012 / VKM B-1768 / DS2) (Halobacterium volcanii)).